We begin with the raw amino-acid sequence, 485 residues long: GlcNAc-binding protein A (485 aa).

The N-terminal stretch at 1 to 29 is a signal peptide; the sequence is MKKQPQKTLLAIALSVVSGTAMSHGYVSA. The 171-residue stretch at 30-200 folds into the Chitin-binding type-4 domain; it reads VENGVAEARV…SFYNVIDVKF (171 aa). The Chitin-binding type-3 domain maps to 437–478; that stretch reads AGTKVLASDGAIYQCKPFPYSGYCVQWTPTATQYQPGTGSHW.

Belongs to the GbpA family.

It is found in the secreted. In terms of biological role, probably interacts with GlcNAc residues. May promote attachment to both epithelial cell surfaces and chitin. The protein is GlcNAc-binding protein A of Vibrio vulnificus (strain YJ016).